A 1721-amino-acid polypeptide reads, in one-letter code: Intersectin-1 (1721 aa).

An EH 1 domain is found at 21–109 (ERAKHDQQFH…PVMKQQPVAI (89 aa)). The 36-residue stretch at 53–88 (LPQPVLAQIWALADMNNDGRMDQVEFSIAMKLIKLK) folds into the EF-hand 1 domain. Ca(2+) contacts are provided by D66, N68, D70, R72, and E77. S203 bears the Phosphoserine mark. The region spanning 221–310 (SRLKYRQLFN…PEYIPPSFRR (90 aa)) is the EH 2 domain. In terms of domain architecture, EF-hand 2 spans 254-289 (LPQAQLASIWNLSDIDQDGKLTAEEFILAMHLIDVA). Positions 267, 269, 271, 273, and 278 each coordinate Ca(2+). A Phosphoserine modification is found at S318. Disordered regions lie at residues 322 to 348 (STSVDQRLPEEPVLEDEQQQLEKKLPV) and 650 to 701 (QRRA…KQEA). Residues 326-702 (DQRLPEEPVL…GEEKGKQEAQ (377 aa)) form a KLERQ region. A coiled-coil region spans residues 355–659 (RENFERGNLE…QRRAQERDKQ (305 aa)). At S687 the chain carries Phosphoserine. One can recognise an SH3 1 domain in the interval 740-806 (VKVVYYRALY…PANYAEKIPE (67 aa)). The tract at residues 836-868 (LAVTSSEPSTTPNNWADFSSTWPTSTNEKPETD) is disordered. Polar residues predominate over residues 838 to 862 (VTSSEPSTTPNNWADFSSTWPTSTN). At T897 the chain carries Phosphothreonine. S901, S902, and S904 each carry phosphoserine. Residues 913–971 (VEGLQAQALYPWRAKKDNHLNFNKNDVITVLEQQDMWWFGEVQGQKGWFPKSYVKLISG) enclose the SH3 2 domain. Phosphoserine occurs at positions 978, 986, and 995. SH3 domains lie at 1002-1060 (VSGE…LKDS) and 1074-1138 (KKPE…LLSP). Positions 1074 to 1138 (KKPEIAQVIA…PANYVKLLSP (65 aa)) are required for interaction with FCHSD2. The short motif at 1104–1127 (RKKNPGGWWEGELQARGKKRQIGW) is the Bipartite nuclear localization signal; in isoform 2 element. Residue S1137 is modified to Phosphoserine. The residue at position 1144 (T1144) is a Phosphothreonine. Residues 1155 to 1214 (AAVCQVIGMYDYTAQNDDELAFNKGQIINVLNKEDPDWWKGEVNGQVGLFPSNYVKLTTD) form the SH3 5 domain. The DH domain maps to 1237-1423 (KRQGYIHELI…EELCSQVNEG (187 aa)). A PH domain is found at 1462–1571 (KFLHSGKLYK…WVQKIKAASE (110 aa)). A C2 domain is found at 1579-1695 (KKREKAYLVR…KKDQGSKGPV (117 aa)). S1645 carries the phosphoserine modification. Residues D1667, S1670, and D1673 each coordinate Ca(2+).

As to quaternary structure, interacts (via DH domain) with CDC42. Interacts (via SH3 domain 1) with WASL. Interacts with dynamin, SNAP25 and SNAP23. Interacts with clathrin-associated proteins and other components of the endocytic machinery, such as SPIN90, EPS15, EPN1, EPN2, STON2, FCHO1, FCHO2 and DAB2. Interacts (via SH3 domains) with REPS1 and SGIP1. Interacts with ARHGAP31. Interacts with ADAM15. Interacts with PRRT2. Interacts (via SH3 domain 4) with FCHSD2 (via SH3 domain 2). Interacts (via SH3 domain 1) with DENND2B. Interacts (via SH3 domains) with CBL. Isoform 2: Interacts with CBL and DNM1. Isoform 2: Interacts with LMNA. Isoform 2: Interacts with importin subunit KPNA1; this is likely to mediate its import into the nucleus. Interacts with DNM2. In terms of assembly, (Microbial infection) Interacts with vaccinia virus protein A36. The cofactor is Ca(2+). As to expression, isoform 1 is expressed almost exclusively in the brain. Isoform 2 is detected in brain, spleen, lung, liver, heart, skeletal muscle and kidney. Isoform 5 is primarily expressed in brain, spleen, lung and kidney (at protein level). Isoform 1 and isoform 2 are detected in brain. Isoform 2 is ubiquitous in adult and fetal tissues with high expression in skeletal muscle, heart, spleen, ovary, testis and all fetal tissues tested and low expression in thymus, blood, lung, liver and pancreas. Isoform 1 is expressed almost exclusively in the brain, in all brain regions. Not expressed in the spinal cord.

The protein localises to the endomembrane system. Its subcellular location is the synapse. The protein resides in the synaptosome. It is found in the cell projection. It localises to the lamellipodium. The protein localises to the cell membrane. Its subcellular location is the membrane. The protein resides in the clathrin-coated pit. It is found in the recycling endosome. It localises to the endosome. The protein localises to the cytoplasmic vesicle. Its subcellular location is the cytoplasm. The protein resides in the nucleus envelope. In terms of biological role, adapter protein that provides a link between the endocytic membrane traffic and the actin assembly machinery. Acts as a guanine nucleotide exchange factor (GEF) for CDC42, and thereby stimulates actin nucleation mediated by WASL and the ARP2/3 complex. Plays a role in the assembly and maturation of clathrin-coated vesicles. Recruits FCHSD2 to clathrin-coated pits. Involved in endocytosis of activated EGFR, and probably also other growth factor receptors. Involved in endocytosis of integrin beta-1 (ITGB1) and transferrin receptor (TFR); internalization of ITGB1 as DAB2-dependent cargo but not TFR may involve association with DAB2. Promotes ubiquitination and subsequent degradation of EGFR, and thereby contributes to the down-regulation of EGFR-dependent signaling pathways. In chromaffin cells, required for normal exocytosis of catecholamines. Required for rapid replenishment of release-ready synaptic vesicles at presynaptic active zones. Inhibits ARHGAP31 activity toward RAC1. Functionally, plays a role in synaptic vesicle endocytosis in brain neurons. The protein is Intersectin-1 of Homo sapiens (Human).